The following is an 867-amino-acid chain: Ent-copalyl diphosphate synthase 1, chloroplastic (867 aa).

A chloroplast-targeting transit peptide spans 1–35 (MIHLHSPPTAPAAFGGAGSADWRRRRRWSWSSSSR). The tract at residues 1–134 (MIHLHSPPTA…ADEEADDELQ (134 aa)) is disordered. Over residues 51-64 (RGGDDGGGEDHHAD) the composition is skewed to basic and acidic residues. Residues 74-89 (AWRARATTAGVSSSSS) are compositionally biased toward low complexity. Over residues 99-121 (IEHETPRITKWPNESRDLDDHQQ) the composition is skewed to basic and acidic residues. Residues 124–133 (EADEEADDEL) are compositionally biased toward acidic residues. Lysine 286 provides a ligand contact to substrate. The DXDD motif motif lies at 418–421 (EVDD). Residue lysine 504 coordinates substrate.

The protein belongs to the terpene synthase family. Mg(2+) serves as cofactor.

It is found in the plastid. Its subcellular location is the chloroplast. It catalyses the reaction (2E,6E,10E)-geranylgeranyl diphosphate = ent-copalyl diphosphate. It functions in the pathway plant hormone biosynthesis; gibberellin biosynthesis. Catalyzes the conversion of geranylgeranyl diphosphate to the gibberellin precursor ent-copalyl diphosphate. The polypeptide is Ent-copalyl diphosphate synthase 1, chloroplastic (CPS1) (Oryza sativa subsp. japonica (Rice)).